The primary structure comprises 67 residues: ATP synthase protein 8 (67 aa).

A helical membrane pass occupies residues 8-24 (TWFITILATILTLFIIM). N6-acetyllysine; alternate is present on Lys-54. N6-succinyllysine; alternate is present on Lys-54. The residue at position 57 (Lys-57) is an N6-acetyllysine.

This sequence belongs to the ATPase protein 8 family. In terms of assembly, F-type ATPases have 2 components, CF(1) - the catalytic core - and CF(0) - the membrane proton channel. Component of an ATP synthase complex composed of ATP5PB, ATP5MC1, ATP5F1E, ATP5PD, ATP5ME, ATP5PF, ATP5MF, MT-ATP6, MT-ATP8, ATP5F1A, ATP5F1B, ATP5F1D, ATP5F1C, ATP5PO, ATP5MG, ATP5MK and ATP5MJ. Interacts with PRICKLE3.

It is found in the mitochondrion membrane. Mitochondrial membrane ATP synthase (F(1)F(0) ATP synthase or Complex V) produces ATP from ADP in the presence of a proton gradient across the membrane which is generated by electron transport complexes of the respiratory chain. F-type ATPases consist of two structural domains, F(1) - containing the extramembraneous catalytic core and F(0) - containing the membrane proton channel, linked together by a central stalk and a peripheral stalk. During catalysis, ATP synthesis in the catalytic domain of F(1) is coupled via a rotary mechanism of the central stalk subunits to proton translocation. Part of the complex F(0) domain. Minor subunit located with subunit a in the membrane. The protein is ATP synthase protein 8 (MT-ATP8) of Artibeus jamaicensis (Jamaican fruit-eating bat).